A 484-amino-acid chain; its full sequence is ATP synthase subunit beta (484 aa).

162–169 lines the ATP pocket; sequence GGAGVGKT.

This sequence belongs to the ATPase alpha/beta chains family. In terms of assembly, F-type ATPases have 2 components, CF(1) - the catalytic core - and CF(0) - the membrane proton channel. CF(1) has five subunits: alpha(3), beta(3), gamma(1), delta(1), epsilon(1). CF(0) has three main subunits: a(1), b(2) and c(9-12). The alpha and beta chains form an alternating ring which encloses part of the gamma chain. CF(1) is attached to CF(0) by a central stalk formed by the gamma and epsilon chains, while a peripheral stalk is formed by the delta and b chains.

It localises to the cell inner membrane. The catalysed reaction is ATP + H2O + 4 H(+)(in) = ADP + phosphate + 5 H(+)(out). In terms of biological role, produces ATP from ADP in the presence of a proton gradient across the membrane. The catalytic sites are hosted primarily by the beta subunits. The chain is ATP synthase subunit beta from Agrobacterium fabrum (strain C58 / ATCC 33970) (Agrobacterium tumefaciens (strain C58)).